We begin with the raw amino-acid sequence, 1144 residues long: Type II inositol polyphosphate 5-phosphatase 14 (1144 aa).

Disordered regions lie at residues 15 to 67 and 81 to 118; these read ASLV…FDSS and GRTS…DDIE. 5 WD repeats span residues 158–196, 216–255, 269–307, 445–483, and 524–561; these read ETQT…EVGC, VPTS…TTTA, AHRG…KSLV, EDTR…LREV, and SHNE…PLDS. Catalytic regions lie at residues 791 to 807 and 870 to 885; these read DLVA…FGIT and KKRI…YRDN. Residue lysine 949 forms a Glycyl lysine isopeptide (Lys-Gly) (interchain with G-Cter in ubiquitin) linkage. Residues 1111 to 1131 show a composition bias toward polar residues; the sequence is TTMTKNLEGSTRYQTDANRGG. The segment at 1111–1144 is disordered; that stretch reads TTMTKNLEGSTRYQTDANRGGSTRHRTDDSTRRG. Residues 1135 to 1144 show a composition bias toward basic and acidic residues; that stretch reads HRTDDSTRRG.

It belongs to the inositol polyphosphate 5-phosphatase family. Mg(2+) is required as a cofactor. In terms of tissue distribution, expressed in young seedlings and flowers.

It catalyses the reaction a 1,2-diacyl-sn-glycero-3-phospho-(1D-myo-inositol-4,5-bisphosphate) + H2O = a 1,2-diacyl-sn-glycero-3-phospho-(1D-myo-inositol 4-phosphate) + phosphate. The catalysed reaction is a 1,2-diacyl-sn-glycero-3-phospho-(1D-myo-inositol-3,4,5-trisphosphate) + H2O = a 1,2-diacyl-sn-glycero-3-phospho-(1D-myo-inositol-3,4-bisphosphate) + phosphate. The enzyme catalyses 1D-myo-inositol 1,4,5-trisphosphate + H2O = 1D-myo-inositol 1,4-bisphosphate + phosphate. Has phosphatase activity toward PtdIns(4,5)P2, PtdIns(3,4,5)P3 and Ins(1,4,5)P3. The sequence is that of Type II inositol polyphosphate 5-phosphatase 14 from Arabidopsis thaliana (Mouse-ear cress).